The sequence spans 888 residues: Translation initiation factor IF-2 (888 aa).

Disordered regions lie at residues 96–122 and 158–302; these read TTKQ…EAPE and ELKE…SAPT. 2 stretches are compositionally biased toward basic and acidic residues: residues 98-114 and 158-167; these read KQDE…EDVS and ELKEKQEKRR. Polar residues predominate over residues 181-206; it reads TQVQEPGSETAAVSGSVAATQPESTE. The span at 207-225 shows a compositional bias: low complexity; sequence TAAVTPSATITVTTQTTPA. Composition is skewed to basic and acidic residues over residues 226-243 and 253-269; these read AKER…EKGE and EAWK…KARG. Positions 390 to 559 constitute a tr-type G domain; it reads SRAPVVTVMG…LLQAEVLELK (170 aa). Positions 399 to 406 are G1; it reads GHVDHGKT. 399–406 is a GTP binding site; the sequence is GHVDHGKT. A G2 region spans residues 424–428; it reads GITQH. Residues 445–448 are G3; that stretch reads DTPG. GTP-binding positions include 445 to 449 and 499 to 502; these read DTPGH and NKMD. A G4 region spans residues 499-502; sequence NKMD. Positions 535–537 are G5; the sequence is SAK.

This sequence belongs to the TRAFAC class translation factor GTPase superfamily. Classic translation factor GTPase family. IF-2 subfamily.

It localises to the cytoplasm. In terms of biological role, one of the essential components for the initiation of protein synthesis. Protects formylmethionyl-tRNA from spontaneous hydrolysis and promotes its binding to the 30S ribosomal subunits. Also involved in the hydrolysis of GTP during the formation of the 70S ribosomal complex. This Nitrosomonas eutropha (strain DSM 101675 / C91 / Nm57) protein is Translation initiation factor IF-2.